The primary structure comprises 172 residues: Large ribosomal subunit protein uL10 (172 aa).

The protein belongs to the universal ribosomal protein uL10 family. In terms of assembly, part of the ribosomal stalk of the 50S ribosomal subunit. The N-terminus interacts with L11 and the large rRNA to form the base of the stalk. The C-terminus forms an elongated spine to which L12 dimers bind in a sequential fashion forming a multimeric L10(L12)X complex.

Functionally, forms part of the ribosomal stalk, playing a central role in the interaction of the ribosome with GTP-bound translation factors. In Rhizobium etli (strain CIAT 652), this protein is Large ribosomal subunit protein uL10.